We begin with the raw amino-acid sequence, 420 residues long: MSIKGDSPSSTNASSSPKSTYSIQSDDKANLGSGNVDIRTDNSQQDSNNRRDIVVVTRVASEETLESQSSTSSMGIRPESSFNYEDASNQARVEMNNRVHGSNMNTINKYYPVRFPKNNERQLSDTNNLNEKVQGTHTVQSSTQEDKILDGDTSNSQVTPSLNIAEFPTDKLLKMLTALLTKIIKSNDRTAATNPSLTQEIENGRCLALSDNEKKYLSPVLGFRGKHVPQIGLDQYFQRIQKYCPTTNDVFLSLLVYFDRISKRCNSVTTTPKTNTAKHESPSNESSLDKANRGADKMSACNSNENNENDDSDDENTGVQRDSRAHPQMFVMDSHNIHRLIIAGITVSTKFLSDFFYSNSRYSRVGGISLQELNHLELQFLVLCDFELLISVNELQRYADLLYRFWNNAKAQSQALVTGM.

Disordered stretches follow at residues 1 to 82 (MSIK…ESSF), 134 to 155 (QGTH…DTSN), and 268 to 321 (VTTT…GVQR). Positions 7 to 22 (SPSSTNASSSPKSTYS) are enriched in low complexity. S61 carries the post-translational modification Phosphoserine. A compositionally biased stretch (polar residues) spans 134–143 (QGTHTVQSST). Residues 277–296 (AKHESPSNESSLDKANRGAD) show a composition bias toward basic and acidic residues. 2 positions are modified to phosphoserine: S281 and S312. The segment covering 307 to 316 (NENDDSDDEN) has biased composition (acidic residues). T317 is modified (phosphothreonine).

The protein belongs to the cyclin family. PHO80 subfamily. As to quaternary structure, forms a cyclin-CDK complex with PHO85. Interacts with the substrate protein YJL084C. Interacts with elongin-C, which stabilizes PCL6. Interacts with the CDK inhibitor (CKI) PHO81.

The protein resides in the cytoplasm. It is found in the nucleus. Functionally, cyclin partner of the cyclin-dependent kinase (CDK) PHO85. Together with cyclin PCL7, controls glycogen phosphorylase and glycogen synthase activities in response to nutrient availablility. The PCL6-PHO85 cyclin-CDK holoenzyme has GLC8 kinase activity and phosphorylates and inactivates the phosphatase PP1-2 inhibitor GLC8, causing activation of PP1-2, which then dephosphorylates and activates glycogen phosphorylase. PCL6-PHO85 also phosphorylates YJL084C. This is PHO85 cyclin-6 (PCL6) from Saccharomyces cerevisiae (strain ATCC 204508 / S288c) (Baker's yeast).